We begin with the raw amino-acid sequence, 1020 residues long: UPF0182 protein jk1603 (1020 aa).

A compositionally biased stretch (pro residues) spans 1–18; that stretch reads MSTPTPPSSGRPKQPFPS. The interval 1–23 is disordered; the sequence is MSTPTPPSSGRPKQPFPSSPGSS. 7 consecutive transmembrane segments (helical) span residues 28–48, 73–93, 125–145, 175–195, 227–247, 272–292, and 300–320; these read ILGI…VVVS, LVLF…AAFL, FLVG…QSNW, LPFL…AFVI, LAVI…FDRY, QIVL…TIVL, and LAVA…PAML. A disordered region spans residues 924–998; that stretch reads QEIDGSVVDP…KVNKTRESGT (75 aa). 2 stretches are compositionally biased toward basic and acidic residues: residues 942–961 and 969–998; these read KGDK…EQSS and KSDD…ESGT.

Belongs to the UPF0182 family.

The protein localises to the cell membrane. The protein is UPF0182 protein jk1603 of Corynebacterium jeikeium (strain K411).